Reading from the N-terminus, the 732-residue chain is Elongation factor 2 (732 aa).

One can recognise a tr-type G domain in the interval Glu-19 to Leu-260. Residues Ala-28 to Thr-35, Asp-94 to His-98, and Asn-148 to Asp-151 each bind GTP. His-597 carries the post-translational modification Diphthamide.

The protein belongs to the TRAFAC class translation factor GTPase superfamily. Classic translation factor GTPase family. EF-G/EF-2 subfamily.

Its subcellular location is the cytoplasm. Its function is as follows. Catalyzes the GTP-dependent ribosomal translocation step during translation elongation. During this step, the ribosome changes from the pre-translocational (PRE) to the post-translocational (POST) state as the newly formed A-site-bound peptidyl-tRNA and P-site-bound deacylated tRNA move to the P and E sites, respectively. Catalyzes the coordinated movement of the two tRNA molecules, the mRNA and conformational changes in the ribosome. This chain is Elongation factor 2, found in Thermococcus onnurineus (strain NA1).